Consider the following 340-residue polypeptide: Outer membrane protein B (340 aa).

The first 26 residues, 1 to 26 (MSSKLVNSLRLTFLSFLGIVSTSLDA), serve as a signal peptide directing secretion.

It belongs to the chlamydial OMP family.

The protein localises to the cell outer membrane. The sequence is that of Outer membrane protein B (ompB) from Chlamydia muridarum (strain MoPn / Nigg).